A 75-amino-acid polypeptide reads, in one-letter code: DNA-directed RNA polymerase subunit omega (75 aa).

Belongs to the RNA polymerase subunit omega family. In terms of assembly, in cyanobacteria the RNAP catalytic core is composed of 2 alpha, 1 beta, 1 beta', 1 gamma and 1 omega subunit. When a sigma factor is associated with the core the holoenzyme is formed, which can initiate transcription.

It carries out the reaction RNA(n) + a ribonucleoside 5'-triphosphate = RNA(n+1) + diphosphate. In terms of biological role, promotes RNA polymerase assembly. Latches the N- and C-terminal regions of the beta' subunit thereby facilitating its interaction with the beta and alpha subunits. The sequence is that of DNA-directed RNA polymerase subunit omega from Cyanothece sp. (strain PCC 7425 / ATCC 29141).